The chain runs to 305 residues: Ornithine carbamoyltransferase (305 aa).

Carbamoyl phosphate is bound by residues 52 to 55 (STRT), Gln-79, Arg-103, and 130 to 133 (HPLQ). Residues Asn-162, Asp-224, and 228–229 (SM) contribute to the L-ornithine site. Carbamoyl phosphate is bound by residues 264 to 265 (CL) and Arg-292.

It belongs to the aspartate/ornithine carbamoyltransferase superfamily. OTCase family.

It localises to the cytoplasm. The catalysed reaction is carbamoyl phosphate + L-ornithine = L-citrulline + phosphate + H(+). The protein operates within amino-acid biosynthesis; L-arginine biosynthesis; L-arginine from L-ornithine and carbamoyl phosphate: step 1/3. Its function is as follows. Reversibly catalyzes the transfer of the carbamoyl group from carbamoyl phosphate (CP) to the N(epsilon) atom of ornithine (ORN) to produce L-citrulline. The polypeptide is Ornithine carbamoyltransferase (Pyrobaculum islandicum (strain DSM 4184 / JCM 9189 / GEO3)).